A 72-amino-acid polypeptide reads, in one-letter code: Large ribosomal subunit protein bL31 (72 aa).

This sequence belongs to the bacterial ribosomal protein bL31 family. Type A subfamily. Part of the 50S ribosomal subunit.

Functionally, binds the 23S rRNA. In Prosthecochloris aestuarii (strain DSM 271 / SK 413), this protein is Large ribosomal subunit protein bL31.